Reading from the N-terminus, the 407-residue chain is D-3-phosphoglycerate dehydrogenase (407 aa).

Residues 161–162 (HI), Asp181, 238–240 (ASR), and Asp264 contribute to the NAD(+) site. Arg240 is an active-site residue. The active site involves Glu269. The Proton donor role is filled by His292. Position 292 to 295 (292 to 295 (HIGG)) interacts with NAD(+). In terms of domain architecture, ACT spans 340–407 (RILNIHNNKP…PNSIKTRVLY (68 aa)).

It belongs to the D-isomer specific 2-hydroxyacid dehydrogenase family.

The enzyme catalyses (2R)-3-phosphoglycerate + NAD(+) = 3-phosphooxypyruvate + NADH + H(+). It carries out the reaction (R)-2-hydroxyglutarate + NAD(+) = 2-oxoglutarate + NADH + H(+). It functions in the pathway amino-acid biosynthesis; L-serine biosynthesis; L-serine from 3-phospho-D-glycerate: step 1/3. Functionally, catalyzes the reversible oxidation of 3-phospho-D-glycerate to 3-phosphonooxypyruvate, the first step of the phosphorylated L-serine biosynthesis pathway. Also catalyzes the reversible oxidation of 2-hydroxyglutarate to 2-oxoglutarate. In Dictyostelium discoideum (Social amoeba), this protein is D-3-phosphoglycerate dehydrogenase (serA).